The primary structure comprises 842 residues: Protein P (842 aa).

A terminal protein domain (TP) region spans residues 1–177; the sequence is MPLSYQHFRR…FCGSPYTWEQ (177 aa). The interval 178-345 is spacer; the sequence is DLQHGAFLDG…YCLSHLVNLL (168 aa). Residues 184-238 form a disordered region; that stretch reads FLDGPSRVGKEPFRQQSSRIPSRSPVGPSIQSKYQQSRLGLQSQKGPLARGQQGR. Residues 197-208 are compositionally biased toward low complexity; sequence RQQSSRIPSRSP. Over residues 212-228 the composition is skewed to polar residues; that stretch reads SIQSKYQQSRLGLQSQK. The polymerase/reverse transcriptase domain (RT) stretch occupies residues 346–689; that stretch reads QDWGPCTEHG…YMNLYPVARQ (344 aa). Residues 356–599 form the Reverse transcriptase domain; sequence EHHIRIPRTP…YSLNFMGYVI (244 aa). Positions 428, 550, and 551 each coordinate Mg(2+).

It belongs to the hepadnaviridae P protein family.

It carries out the reaction DNA(n) + a 2'-deoxyribonucleoside 5'-triphosphate = DNA(n+1) + diphosphate. The catalysed reaction is Endonucleolytic cleavage to 5'-phosphomonoester.. Activated by host HSP70 and HSP40 in vitro to be able to bind the epsilon loop of the pgRNA. Because deletion of the RNase H region renders the protein partly chaperone-independent, the chaperones may be needed indirectly to relieve occlusion of the RNA-binding site by this domain. Inhibited by several reverse-transcriptase inhibitors: Lamivudine, Adefovir and Entecavir. Its function is as follows. Multifunctional enzyme that converts the viral RNA genome into dsDNA in viral cytoplasmic capsids. This enzyme displays a DNA polymerase activity that can copy either DNA or RNA templates, and a ribonuclease H (RNase H) activity that cleaves the RNA strand of RNA-DNA heteroduplexes in a partially processive 3'- to 5'-endonucleasic mode. Neo-synthesized pregenomic RNA (pgRNA) are encapsidated together with the P protein, and reverse-transcribed inside the nucleocapsid. Initiation of reverse-transcription occurs first by binding the epsilon loop on the pgRNA genome, and is initiated by protein priming, thereby the 5'-end of (-)DNA is covalently linked to P protein. Partial (+)DNA is synthesized from the (-)DNA template and generates the relaxed circular DNA (RC-DNA) genome. After budding and infection, the RC-DNA migrates in the nucleus, and is converted into a plasmid-like covalently closed circular DNA (cccDNA). The activity of P protein does not seem to be necessary for cccDNA generation, and is presumably released from (+)DNA by host nuclear DNA repair machinery. The polypeptide is Protein P (Hepatitis B virus genotype G (isolate IG29227/2000) (HBV-G)).